Consider the following 459-residue polypeptide: Disease resistance protein CHL1 (459 aa).

The 155-residue stretch at 16–170 (REVDVFLSFC…QIARDISLVV (155 aa)) folds into the TIR domain. The active site involves Glu89. The NB-ARC domain maps to 191–401 (VYDLLALEVN…LLKLKAKQGG (211 aa)). Over residues 429–440 (ERKESSQDKSQQ) the composition is skewed to basic and acidic residues. Residues 429–459 (ERKESSQDKSQQESEVAADILIGKESSQDKQ) are disordered.

As to expression, mostly expressed in leaves, stems and roots, and, to a lower extent, in flowers and siliques.

It is found in the cytoplasm. The enzyme catalyses NAD(+) + H2O = ADP-D-ribose + nicotinamide + H(+). Its function is as follows. Confers resistance to low temperatures by limiting chloroplast damage and cell death, thus maintaining growth homeostasis. The polypeptide is Disease resistance protein CHL1 (Arabidopsis thaliana (Mouse-ear cress)).